The chain runs to 288 residues: Acetyl-coenzyme A carboxylase carboxyl transferase subunit beta (288 aa).

The CoA carboxyltransferase N-terminal domain occupies 34–288; that stretch reads LFAKCPGCKQ…TLLSFHGGVQ (255 aa). Zn(2+) is bound by residues Cys-38, Cys-41, Cys-56, and Cys-59. The C4-type zinc-finger motif lies at 38-59; the sequence is CPGCKQAIYQKDLGQAKICPNC.

It belongs to the AccD/PCCB family. Acetyl-CoA carboxylase is a heterohexamer composed of biotin carboxyl carrier protein (AccB), biotin carboxylase (AccC) and two subunits each of ACCase subunit alpha (AccA) and ACCase subunit beta (AccD). Requires Zn(2+) as cofactor.

It localises to the cytoplasm. It carries out the reaction N(6)-carboxybiotinyl-L-lysyl-[protein] + acetyl-CoA = N(6)-biotinyl-L-lysyl-[protein] + malonyl-CoA. It participates in lipid metabolism; malonyl-CoA biosynthesis; malonyl-CoA from acetyl-CoA: step 1/1. Component of the acetyl coenzyme A carboxylase (ACC) complex. Biotin carboxylase (BC) catalyzes the carboxylation of biotin on its carrier protein (BCCP) and then the CO(2) group is transferred by the transcarboxylase to acetyl-CoA to form malonyl-CoA. The sequence is that of Acetyl-coenzyme A carboxylase carboxyl transferase subunit beta from Streptococcus thermophilus (strain CNRZ 1066).